We begin with the raw amino-acid sequence, 405 residues long: Glucoside xylosyltransferase 1 (405 aa).

At 1-2 (MR) the chain is on the cytoplasmic side. Residues 3–23 (IYLRTFGLCIVVALLSLVFLF) form a helical; Signal-anchor for type II membrane protein membrane-spanning segment. Residues 24-405 (SKHDEGSFSA…RLQRATPPGD (382 aa)) lie on the Lumenal side of the membrane. Residues 46-65 (SFNGAKAKQRPTATTSHRDV) form a disordered region. Residues Asn202, Asn243, Asn277, and Asn372 are each glycosylated (N-linked (GlcNAc...) asparagine).

It belongs to the glycosyltransferase 8 family.

The protein resides in the membrane. It carries out the reaction 3-O-(beta-D-glucosyl)-L-seryl-[EGF-like domain protein] + UDP-alpha-D-xylose = 3-O-[alpha-D-xylosyl-(1-&gt;3)-beta-D-glucosyl]-L-seryl-[EGF-like domain protein] + UDP + H(+). Functionally, glycosyltransferase which elongates the O-linked glucose attached to EGF-like repeats in the extracellular domain of Notch proteins by catalyzing the addition of xylose. This is Glucoside xylosyltransferase 1 (gxylt1) from Danio rerio (Zebrafish).